Here is a 156-residue protein sequence, read N- to C-terminus: Putative pre-16S rRNA nuclease (156 aa).

The protein belongs to the YqgF nuclease family.

The protein localises to the cytoplasm. In terms of biological role, could be a nuclease involved in processing of the 5'-end of pre-16S rRNA. The polypeptide is Putative pre-16S rRNA nuclease (Ehrlichia chaffeensis (strain ATCC CRL-10679 / Arkansas)).